A 151-amino-acid chain; its full sequence is Protein Smg homolog (151 aa).

The protein belongs to the Smg family.

In Laribacter hongkongensis (strain HLHK9), this protein is Protein Smg homolog.